A 208-amino-acid polypeptide reads, in one-letter code: MSHASPDAARSRIVLASNNPGKLREFAALFSTAGIDIVPQGELGVSEADEPHATFVENALAKARHASRATGLPAVADDSGLCVPALLGAPGVYSARYAQRAGREKSDAANNAYLVEQLREVADRRAYYYCVLALVRHADDPEPLIAEGRWAGEIVDAPRGAHGFGYDPHFFVPALGATAAELDPAAKNAASHRALALKALVARLGEIR.

Residue 17-22 (SNNPGK) participates in substrate binding. Mg(2+) contacts are provided by Asp-49 and Asp-78. Asp-78 (proton acceptor) is an active-site residue. Substrate-binding positions include Ser-79, 164-167 (FGYD), Lys-187, and 192-193 (HR).

Belongs to the HAM1 NTPase family. In terms of assembly, homodimer. The cofactor is Mg(2+).

The enzyme catalyses XTP + H2O = XMP + diphosphate + H(+). The catalysed reaction is dITP + H2O = dIMP + diphosphate + H(+). It catalyses the reaction ITP + H2O = IMP + diphosphate + H(+). In terms of biological role, pyrophosphatase that catalyzes the hydrolysis of nucleoside triphosphates to their monophosphate derivatives, with a high preference for the non-canonical purine nucleotides XTP (xanthosine triphosphate), dITP (deoxyinosine triphosphate) and ITP. Seems to function as a house-cleaning enzyme that removes non-canonical purine nucleotides from the nucleotide pool, thus preventing their incorporation into DNA/RNA and avoiding chromosomal lesions. This is dITP/XTP pyrophosphatase from Burkholderia pseudomallei (strain K96243).